Reading from the N-terminus, the 151-residue chain is Nucleoside diphosphate kinase (151 aa).

Residues Lys9, Phe57, Arg86, Thr92, Arg103, and Asn113 each coordinate ATP. The Pros-phosphohistidine intermediate role is filled by His116.

This sequence belongs to the NDK family. In terms of assembly, homotetramer. The cofactor is Mg(2+).

It is found in the cytoplasm. It carries out the reaction a 2'-deoxyribonucleoside 5'-diphosphate + ATP = a 2'-deoxyribonucleoside 5'-triphosphate + ADP. The catalysed reaction is a ribonucleoside 5'-diphosphate + ATP = a ribonucleoside 5'-triphosphate + ADP. Functionally, major role in the synthesis of nucleoside triphosphates other than ATP. The ATP gamma phosphate is transferred to the NDP beta phosphate via a ping-pong mechanism, using a phosphorylated active-site intermediate. This Chloroflexus aggregans (strain MD-66 / DSM 9485) protein is Nucleoside diphosphate kinase.